The following is a 552-amino-acid chain: Phosphoglucomutase (552 aa).

Ser143 serves as the catalytic Phosphoserine intermediate. Ser143, Asp295, Asp297, and Asp299 together coordinate Mg(2+).

The protein belongs to the phosphohexose mutase family. Mg(2+) is required as a cofactor.

It carries out the reaction alpha-D-glucose 1-phosphate = alpha-D-glucose 6-phosphate. Its pathway is glycolipid metabolism; diglucosyl-diacylglycerol biosynthesis. Its function is as follows. Catalyzes the interconversion between glucose-6-phosphate and alpha-glucose-1-phosphate. This is the first step in the biosynthesis of diglucosyl-diacylglycerol (Glc2-DAG), i.e. the predominant glycolipid found in the S.aureus membrane, which is also used as a membrane anchor for lipoteichoic acid (LTA). The sequence is that of Phosphoglucomutase (pgcA) from Staphylococcus aureus (strain USA300).